Here is a 401-residue protein sequence, read N- to C-terminus: Sodium/glutamate symporter (401 aa).

Residues 1–6 (MFHLDT) lie on the Periplasmic side of the membrane. Residues 7-24 (LATLVAATLTLLLGRKLV) traverse the membrane as a helical segment. Topologically, residues 25-32 (HSVSFLKK) are cytoplasmic. Residues 33-52 (YTIPEPVAGGLLVALALLVL) form a helical membrane-spanning segment. Residues 53-69 (KKSMGWEVNFDMSLRDP) are Periplasmic-facing. A helical transmembrane segment spans residues 70–87 (LMLAFFATIGLNANIASL). The Cytoplasmic segment spans residues 88–93 (RAGGRV). The chain crosses the membrane as a helical span at residues 94–116 (VGIFLIVVVGLLVMQNAIGIGMA). Topologically, residues 117 to 156 (SLLGLDPLMGLLAGSITLSGGHGTGAAWSKLFIERYGFTN) are periplasmic. Residues 157 to 179 (ATEVAMACATFGLVLGGLIGGPV) traverse the membrane as a helical segment. The Cytoplasmic portion of the chain corresponds to 180–212 (ARYLVKHSTTPNGIPDDQEVPTAFEKPDVGRMI). A helical transmembrane segment spans residues 213 to 235 (TSLVLIETIALIAICLTVGKIVA). The Periplasmic segment spans residues 236–244 (QLLAGTAFE). Residues 245–267 (LPTFVCVLFVGVILSNGLSIMGF) traverse the membrane as a helical segment. Residues 268-276 (YRVFERAVS) lie on the Cytoplasmic side of the membrane. Residues 277 to 292 (VLGNVSLSLFLAMALM) traverse the membrane as a helical segment. Over 293–301 (GLKLWELAS) the chain is Periplasmic. The helical transmembrane segment at 302 to 324 (LALPMLAILVVQTIFMALYAIFV) threads the bilayer. Topologically, residues 325–367 (TWRMMGKNYDAAVLAAGHCGFGLGATPTAIANMQAITERFGPS) are cytoplasmic. Residues 368 to 390 (HMAFLVVPMVGAFFIDIVNALVI) traverse the membrane as a helical segment. At 391 to 401 (KLYLMLPIFAG) the chain is on the periplasmic side.

The protein belongs to the glutamate:Na(+) symporter (ESS) (TC 2.A.27) family.

The protein localises to the cell inner membrane. With respect to regulation, inhibited by the uncoupler carbonylcyanide m-chlorophenylhydrazone (CCCP) and the ionophore monensin. Its function is as follows. Catalyzes the sodium-dependent, binding-protein-independent transport of glutamate. In Escherichia coli (strain K12), this protein is Sodium/glutamate symporter.